Reading from the N-terminus, the 445-residue chain is Rab GDP dissociation inhibitor beta (445 aa).

At Met-1 the chain carries N-acetylmethionine. N6-succinyllysine is present on Lys-57. N6-acetyllysine is present on Lys-112. Ser-130 is modified (phosphoserine). The residue at position 269 (Lys-269) is an N6-acetyllysine. Residue Ser-382 is modified to Phosphoserine.

The protein belongs to the Rab GDI family. Interacts with RHOH. Interacts with the GDP-bound inactive forms of RAB3A, RAB3B, RAB3C, RAB5A, RAB5B, RAB5C, RAB8A, RAB8B, RAB10, RAB12, RAB35, and RAB43; binds RAB3D to a lesser extent. Interacts with DZIP1; this interaction negatively regulates the interaction of GDI2 with GDP-bound RAB8A.

The protein resides in the cytoplasm. Its subcellular location is the membrane. The protein localises to the golgi apparatus. It is found in the trans-Golgi network. Its function is as follows. GDP-dissociation inhibitor preventing the GDP to GTP exchange of most Rab proteins. By keeping these small GTPases in their inactive GDP-bound form regulates intracellular membrane trafficking. Negatively regulates protein transport to the cilium and ciliogenesis through the inhibition of RAB8A. The polypeptide is Rab GDP dissociation inhibitor beta (GDI2) (Pongo abelii (Sumatran orangutan)).